A 246-amino-acid polypeptide reads, in one-letter code: Aquaporin SIP1-1 (246 aa).

Transmembrane regions (helical) follow at residues 13–33 (AAVTFLWVLCVSTLGASTAAV) and 45–65 (YALLVTVSLLSVLLFAFNLLC). Residues 74–76 (NPT) carry the NPA 1 motif. 3 helical membrane passes run 95-115 (FPLALRFPAQAAGAVGGAMAI), 139-159 (GAAAELVLTFVITLAVLWIIV), and 166-186 (IVKTWMLSISTVCLVLTGAAY). Positions 192 to 194 (NPA) match the NPA 2 motif. A helical membrane pass occupies residues 214–234 (VYWICPFVGAVLAAWVFRAVF).

This sequence belongs to the MIP/aquaporin (TC 1.A.8) family. SIP (TC 1.A.8.10) subfamily. As to expression, expressed in roots, leaves and anthers.

Its subcellular location is the membrane. Functionally, aquaporins facilitate the transport of water and small neutral solutes across cell membranes. The chain is Aquaporin SIP1-1 (SIP1-1) from Oryza sativa subsp. japonica (Rice).